We begin with the raw amino-acid sequence, 70 residues long: Small ribosomal subunit protein bS21 (70 aa).

This sequence belongs to the bacterial ribosomal protein bS21 family.

This is Small ribosomal subunit protein bS21 from Paracidovorax citrulli (strain AAC00-1) (Acidovorax citrulli).